The sequence spans 236 residues: Purine nucleoside phosphorylase DeoD-type 2 (236 aa).

His-5 lines the a purine D-ribonucleoside pocket. Residues Gly-21, Arg-25, Arg-44, and 88–91 (RVGS) contribute to the phosphate site. A purine D-ribonucleoside contacts are provided by residues 180-182 (DME) and 204-205 (SD). Residue Asp-205 is the Proton donor of the active site.

It belongs to the PNP/UDP phosphorylase family. As to quaternary structure, homohexamer; trimer of homodimers.

It carries out the reaction a purine D-ribonucleoside + phosphate = a purine nucleobase + alpha-D-ribose 1-phosphate. The catalysed reaction is a purine 2'-deoxy-D-ribonucleoside + phosphate = a purine nucleobase + 2-deoxy-alpha-D-ribose 1-phosphate. In terms of biological role, catalyzes the reversible phosphorolytic breakdown of the N-glycosidic bond in the beta-(deoxy)ribonucleoside molecules, with the formation of the corresponding free purine bases and pentose-1-phosphate. In Photobacterium profundum (strain SS9), this protein is Purine nucleoside phosphorylase DeoD-type 2.